We begin with the raw amino-acid sequence, 282 residues long: Large ribosomal subunit protein uL2 (282 aa).

The interval 230-282 (AMNPIDHPLGGGEGRSSGGRHPVSPWGMPAKGYKTRDKKKASSRLIVKRRGQK) is disordered. The segment covering 265–282 (RDKKKASSRLIVKRRGQK) has biased composition (basic residues).

It belongs to the universal ribosomal protein uL2 family. Part of the 50S ribosomal subunit. Forms a bridge to the 30S subunit in the 70S ribosome.

Its function is as follows. One of the primary rRNA binding proteins. Required for association of the 30S and 50S subunits to form the 70S ribosome, for tRNA binding and peptide bond formation. It has been suggested to have peptidyltransferase activity; this is somewhat controversial. Makes several contacts with the 16S rRNA in the 70S ribosome. This Desulfovibrio desulfuricans (strain ATCC 27774 / DSM 6949 / MB) protein is Large ribosomal subunit protein uL2.